A 326-amino-acid chain; its full sequence is Transcription factor MYB16 (326 aa).

HTH myb-type domains follow at residues 9 to 61 (KLGL…TNYL) and 62 to 116 (RPDI…KKRL). DNA-binding regions (H-T-H motif) lie at residues 37–61 (WRSLPEKAGLHRCGKSCRLRWTNYL) and 89–112 (WSAIATHLPKRTDNEIKNYWNTHL). Disordered regions lie at residues 197–217 (NWTTKPHEDQQQLESPTSTVS) and 280–299 (DRSFSGDKNETAGESSGGDC). Residues 208-217 (QLESPTSTVS) are compositionally biased toward polar residues. Basic and acidic residues predominate over residues 280–290 (DRSFSGDKNET).

Expressed in trichomes, epidermis and mesophyll cells of young leaves, stems, petals, sepals, carpels and stamens.

It is found in the nucleus. In terms of biological role, involved in the control of epidermal cell morphogenesis in petals. Promotes unidirectional cell expansion once outgrowth has been initiated. Coordinately with WIN1/SHN1, participates in the regulation of cuticle biosynthesis and wax accumulation in reproductive organs and trichomes. Functions in cuticle nanoridge formation in petals and stamens, and in morphogenesis of petal conical cells and trichomes. Functions as a major regulator of cuticle formation in vegetative organs by regulating the cuticle biosynthesis genes CYP86A8/LCR and CER1. This Arabidopsis thaliana (Mouse-ear cress) protein is Transcription factor MYB16.